Consider the following 101-residue polypeptide: MILEHVLVLSAYLFSIGIYGLITSRNMVRALMCLELILNSVNLNFVTFSDFFDSRQLKGDIFSIFIIAIAAAEAAIGLAIVSSIYRNRKSIRINQSNLLNK.

3 helical membrane passes run 2–22 (ILEH…YGLI), 32–52 (MCLE…SDFF), and 61–81 (IFSI…LAIV).

It belongs to the complex I subunit 4L family. NDH is composed of at least 16 different subunits, 5 of which are encoded in the nucleus.

It is found in the plastid. It localises to the chloroplast thylakoid membrane. The catalysed reaction is a plastoquinone + NADH + (n+1) H(+)(in) = a plastoquinol + NAD(+) + n H(+)(out). The enzyme catalyses a plastoquinone + NADPH + (n+1) H(+)(in) = a plastoquinol + NADP(+) + n H(+)(out). Functionally, NDH shuttles electrons from NAD(P)H:plastoquinone, via FMN and iron-sulfur (Fe-S) centers, to quinones in the photosynthetic chain and possibly in a chloroplast respiratory chain. The immediate electron acceptor for the enzyme in this species is believed to be plastoquinone. Couples the redox reaction to proton translocation, and thus conserves the redox energy in a proton gradient. The chain is NAD(P)H-quinone oxidoreductase subunit 4L, chloroplastic from Oenothera argillicola (Appalachian evening primrose).